The following is a 448-amino-acid chain: Methylenetetrahydrofolate--tRNA-(uracil-5-)-methyltransferase TrmFO (448 aa).

Residue 13–18 participates in FAD binding; the sequence is GAGLAG.

The protein belongs to the MnmG family. TrmFO subfamily. It depends on FAD as a cofactor.

The protein resides in the cytoplasm. The catalysed reaction is uridine(54) in tRNA + (6R)-5,10-methylene-5,6,7,8-tetrahydrofolate + NADH + H(+) = 5-methyluridine(54) in tRNA + (6S)-5,6,7,8-tetrahydrofolate + NAD(+). The enzyme catalyses uridine(54) in tRNA + (6R)-5,10-methylene-5,6,7,8-tetrahydrofolate + NADPH + H(+) = 5-methyluridine(54) in tRNA + (6S)-5,6,7,8-tetrahydrofolate + NADP(+). In terms of biological role, catalyzes the folate-dependent formation of 5-methyl-uridine at position 54 (M-5-U54) in all tRNAs. The chain is Methylenetetrahydrofolate--tRNA-(uracil-5-)-methyltransferase TrmFO from Streptococcus pyogenes serotype M3 (strain ATCC BAA-595 / MGAS315).